The following is a 287-amino-acid chain: 4-hydroxybenzoate octaprenyltransferase (287 aa).

The next 9 membrane-spanning stretches (helical) occupy residues Pro19–Gly39, Leu43–Ile63, Val94–Phe114, Leu118–Ile138, Val142–Ile162, Trp167–Val187, Val209–Leu229, Tyr235–Ser255, and Phe263–Gly283.

The protein belongs to the UbiA prenyltransferase family. Mg(2+) is required as a cofactor.

It localises to the cell inner membrane. The enzyme catalyses all-trans-octaprenyl diphosphate + 4-hydroxybenzoate = 4-hydroxy-3-(all-trans-octaprenyl)benzoate + diphosphate. It functions in the pathway cofactor biosynthesis; ubiquinone biosynthesis. Catalyzes the prenylation of para-hydroxybenzoate (PHB) with an all-trans polyprenyl group. Mediates the second step in the final reaction sequence of ubiquinone-8 (UQ-8) biosynthesis, which is the condensation of the polyisoprenoid side chain with PHB, generating the first membrane-bound Q intermediate 3-octaprenyl-4-hydroxybenzoate. This is 4-hydroxybenzoate octaprenyltransferase from Polynucleobacter asymbioticus (strain DSM 18221 / CIP 109841 / QLW-P1DMWA-1) (Polynucleobacter necessarius subsp. asymbioticus).